A 433-amino-acid polypeptide reads, in one-letter code: 3-phosphoshikimate 1-carboxyvinyltransferase (433 aa).

3 residues coordinate 3-phosphoshikimate: lysine 22, serine 23, and arginine 27. Lysine 22 provides a ligand contact to phosphoenolpyruvate. Positions 95 and 123 each coordinate phosphoenolpyruvate. 3-phosphoshikimate contacts are provided by serine 167, glutamine 169, aspartate 315, and lysine 342. Phosphoenolpyruvate is bound at residue glutamine 169. The Proton acceptor role is filled by aspartate 315. Residues arginine 346 and arginine 387 each contribute to the phosphoenolpyruvate site.

Belongs to the EPSP synthase family. As to quaternary structure, monomer.

The protein localises to the cytoplasm. The catalysed reaction is 3-phosphoshikimate + phosphoenolpyruvate = 5-O-(1-carboxyvinyl)-3-phosphoshikimate + phosphate. Its pathway is metabolic intermediate biosynthesis; chorismate biosynthesis; chorismate from D-erythrose 4-phosphate and phosphoenolpyruvate: step 6/7. In terms of biological role, catalyzes the transfer of the enolpyruvyl moiety of phosphoenolpyruvate (PEP) to the 5-hydroxyl of shikimate-3-phosphate (S3P) to produce enolpyruvyl shikimate-3-phosphate and inorganic phosphate. This is 3-phosphoshikimate 1-carboxyvinyltransferase from Legionella pneumophila subsp. pneumophila (strain Philadelphia 1 / ATCC 33152 / DSM 7513).